Here is a 100-residue protein sequence, read N- to C-terminus: Acylphosphatase (100 aa).

The 87-residue stretch at 14–100 (RWRFFVEGKV…TGADWFEIRS (87 aa)) folds into the Acylphosphatase-like domain. Active-site residues include arginine 29 and asparagine 47.

This sequence belongs to the acylphosphatase family.

It catalyses the reaction an acyl phosphate + H2O = a carboxylate + phosphate + H(+). This Synechococcus sp. (strain WH7803) protein is Acylphosphatase (acyP).